A 421-amino-acid polypeptide reads, in one-letter code: Histidine--tRNA ligase (421 aa).

It belongs to the class-II aminoacyl-tRNA synthetase family.

Its subcellular location is the cytoplasm. It carries out the reaction tRNA(His) + L-histidine + ATP = L-histidyl-tRNA(His) + AMP + diphosphate + H(+). This Pyrobaculum islandicum (strain DSM 4184 / JCM 9189 / GEO3) protein is Histidine--tRNA ligase.